Here is a 548-residue protein sequence, read N- to C-terminus: Chaperonin GroEL (548 aa).

Residues 30 to 33 (TLGP), lysine 51, 87 to 91 (DGTTT), glycine 415, 479 to 481 (NAA), and aspartate 495 each bind ATP.

It belongs to the chaperonin (HSP60) family. Forms a cylinder of 14 subunits composed of two heptameric rings stacked back-to-back. Interacts with the co-chaperonin GroES.

The protein resides in the cytoplasm. It catalyses the reaction ATP + H2O + a folded polypeptide = ADP + phosphate + an unfolded polypeptide.. Functionally, together with its co-chaperonin GroES, plays an essential role in assisting protein folding. The GroEL-GroES system forms a nano-cage that allows encapsulation of the non-native substrate proteins and provides a physical environment optimized to promote and accelerate protein folding. The polypeptide is Chaperonin GroEL (Nitratidesulfovibrio vulgaris (strain DSM 19637 / Miyazaki F) (Desulfovibrio vulgaris)).